Here is a 338-residue protein sequence, read N- to C-terminus: MENLDALVSQALEAVQSAEDINALEQIRVQYLGKKGELTQVMKTLGNLPAEERPQVGALINVAKERVTGVLNARMALFEEAELAAKLSAESIDVTLPGRGQTSGGLHPVTRTLERIEQFFTHIGYGIAEGPEVEDDYHNFEALNIPGHHPARSMHDTFYFNANMLLRTHTSPVQVRTMESKKPPIRIVCPGRVYRSDSDITHSPMFHQVEGLLVDRDINFADLKGTIEEFLRVFFEKELAVRFRPSYFPFTEPSAEVDMECVMCSGKGCRVCKQTGWLEVMGCGMVHPNVLRMSGIDPEEFSGFAFGMGVERLAMLRYGVNDLRLFFDNDLRFLAQFR.

Glutamate 252 lines the Mg(2+) pocket.

It belongs to the class-II aminoacyl-tRNA synthetase family. Phe-tRNA synthetase alpha subunit type 1 subfamily. In terms of assembly, tetramer of two alpha and two beta subunits. Mg(2+) serves as cofactor.

The protein localises to the cytoplasm. The catalysed reaction is tRNA(Phe) + L-phenylalanine + ATP = L-phenylalanyl-tRNA(Phe) + AMP + diphosphate + H(+). The sequence is that of Phenylalanine--tRNA ligase alpha subunit from Pseudomonas fluorescens (strain Pf0-1).